The sequence spans 316 residues: Methionyl-tRNA formyltransferase (316 aa).

112-115 (SLLP) contacts (6S)-5,6,7,8-tetrahydrofolate.

It belongs to the Fmt family.

The enzyme catalyses L-methionyl-tRNA(fMet) + (6R)-10-formyltetrahydrofolate = N-formyl-L-methionyl-tRNA(fMet) + (6S)-5,6,7,8-tetrahydrofolate + H(+). Its function is as follows. Attaches a formyl group to the free amino group of methionyl-tRNA(fMet). The formyl group appears to play a dual role in the initiator identity of N-formylmethionyl-tRNA by promoting its recognition by IF2 and preventing the misappropriation of this tRNA by the elongation apparatus. This Trichlorobacter lovleyi (strain ATCC BAA-1151 / DSM 17278 / SZ) (Geobacter lovleyi) protein is Methionyl-tRNA formyltransferase.